The following is a 599-amino-acid chain: BICD family-like cargo adapter 1 (599 aa).

A disordered region spans residues 1-27 (MELPISFLSDSSRPAASSERGDQAALG). A CC1 box motif is present at residues 76 to 80 (AARLG). A coiled-coil region spans residues 80–341 (GKALLERNQD…WEAHCQVRSL (262 aa)). A disordered region spans residues 352-375 (DSAVSTDSSMDESSETSSAKDVPA). The stretch at 405–536 (EDDGLEEQIK…LEAWQDDMHR (132 aa)) forms a coiled coil.

Belongs to the BICDR family. As to quaternary structure, part of a tripartite complex with dynein and dynactin, acts an adapter linking the dynein motor complex and dynactin. Interacts with KIF1C. Interacts with RAB6A and RAB6B; interaction is specific to Rab6.

Its subcellular location is the cytoplasm. The protein resides in the cytoskeleton. It localises to the microtubule organizing center. It is found in the centrosome. Acts as an adapter protein linking the dynein motor complex to various cargos and converts dynein from a non-processive to a highly processive motor in the presence of dynactin. Facilitates the interaction between dynein and dynactin and activates dynein processivity (the ability to move along a microtubule for a long distance without falling off the track). Predominantly recruits 2 dyneins, which increases both the force and speed of the microtubule motor. Component of secretory vesicle machinery in developing neurons that acts as a regulator of neurite outgrowth. Regulates the secretory vesicle transport by controlling the accumulation of Rab6-containing secretory vesicles in the pericentrosomal region restricting anterograde secretory transport during the early phase of neuronal differentiation, thereby inhibiting neuritogenesis. The chain is BICD family-like cargo adapter 1 (bicdl1) from Xenopus tropicalis (Western clawed frog).